Consider the following 309-residue polypeptide: MPIPKNRPMHVEEEVSSQTNTEILLFALVIILSVIFINFFFFYLCRCCVYFYHTLENQEGDDERPLIQHHMVNRSTGSLSPSVDRLGNVLGYDIPSRRRRSVVSKEALSCISLEIPYIKWLKKRKGHAKGESTFLDNRSENQSVIVQGQGETPSVIITYDVRRPNLGSTSFVEMSSALSNIYNTDASDGDSSDDSCLLEDEEDFCIICYADYAFDDILRVLPCEHVFHTQCIDTWMTTMKASCPLCNEDYYKYFLQMDAASSVTHENAAWSIPLSPGDSRTHSAETDRSLLSAMSVRNSRMPYIVSSTL.

A helical membrane pass occupies residues 23 to 43 (ILLFALVIILSVIFINFFFFY). An RING-type; atypical zinc finger spans residues 205–247 (CIICYADYAFDDILRVLPCEHVFHTQCIDTWMTTMKASCPLCN).

Its subcellular location is the membrane. In terms of biological role, has a role in meiosis. The protein is RING finger protein mug145 (mug145) of Schizosaccharomyces pombe (strain 972 / ATCC 24843) (Fission yeast).